The chain runs to 478 residues: Calcium uptake protein 1, mitochondrial (478 aa).

The transit peptide at 1–33 (MFRLNSLSALAELAVGSRWYHGGSQPTQIRRRL) directs the protein to the mitochondrion. Residues 61–85 (PSANNIKSELGDKGKSKEEGEDCNA) form a disordered region. Basic and acidic residues predominate over residues 69–85 (ELGDKGKSKEEGEDCNA). The segment at 101-112 (KKKKRSGFRDRK) is polybasic region. Position 124 is a phosphoserine (S124). Positions 128–131 (KIFR) are k/R-ring. Residues 220-255 (TPQRNFEIAFKMFDLNGDGEVDMEEFEQVQSIIRSQ) enclose the EF-hand 1 domain. Ca(2+)-binding residues include D233, N235, D237, E239, and E244. The tract at residues 261–265 (RHRDR) is k/R-ring. The EF-hand 2 domain occupies 410-445 (LSDHVCDVVFALFDCDGNGELSNKEFVSIMKQRLMR). D423, D425, N427, E429, and E434 together coordinate Ca(2+). At R457 the chain carries Asymmetric dimethylarginine. A C-helix region region spans residues 457–467 (RLMQAMWKCAQ).

Belongs to the MICU1 family. MICU1 subfamily. Heterodimer; disulfide-linked; heterodimerizes with MICU2 or MICU3. Homodimer; disulfide-linked. Component of the uniplex complex, composed of MCU, EMRE/SMDT1, MICU1 and MICU2 (or MICU3) in a 4:4:1:1 stoichiometry. The composition of calcium sensors within the uniplex complex can differ depending on tissues: a MICU1 homodimer can be present instead of the MICU1-MICU2 heterodimer in skeletal-muscle and kidney. MICU1 is recruited to the uniplex complex by EMRE/SMDT1, and it associates with MCU at low calcium levels, occluding the pore of the MCU channel. Associates with the MICOS complex. Interacts with SLC25A23. Interacts with CHCHD4/MIA40; which introduces the interchain disulfide bond with MICU2. Interacts (when methylated) with UCP2; leading to decrease the calcium sensitivity of MICU1. Phosphorylation at Ser-124 by AKT1 impairs its maturation and stability. Post-translationally, asymmetric dimethylation at Arg-457 by PRMT1 decreases the calcium sensitivity of MICU1 by promoting interaction with UCP2. In terms of processing, degraded by YME1L1 when not complexed as homodimer or heterodimer. Not degraded when complexed as homodimer or heterodimer; the presence of the interchain disulfide bond protecting MICU1 from degradation by YME1L1.

It localises to the mitochondrion intermembrane space. The protein localises to the mitochondrion inner membrane. Its function is as follows. Calcium sensor of the mitochondrial calcium uniporter (MCU) channel, which senses calcium level via its EF-hand domains. MICU1 and MICU2 (or MICU3) form a disulfide-linked heterodimer that stimulates and inhibits MCU activity, depending on the concentration of calcium. At low calcium levels, MICU1 occludes the pore of the MCU channel, preventing mitochondrial calcium uptake. At higher calcium levels, calcium-binding to MICU1 and MICU2 (or MICU3) induces a conformational change that weakens MCU-MICU1 interactions and moves the MICU1-MICU2 heterodimer away from the pore, allowing calcium permeation through the MCU channel. Also required to protect against manganese toxicity by preventing manganese uptake by MCU: mechanistically, manganese-binding to its EF-hand domains does not induce any conformational change, maintaining MCU pore occlusion. Acts as a regulator of mitochondrial cristae structure independently of its ability to regulate the mitochondrial calcium uniporter channel. Regulates glucose-dependent insulin secretion in pancreatic beta-cells by regulating mitochondrial calcium uptake. Induces T-helper 1-mediated autoreactivity, which is accompanied by the release of IFNG. The protein is Calcium uptake protein 1, mitochondrial (MICU1) of Bos taurus (Bovine).